The primary structure comprises 315 residues: Holliday junction branch migration complex subunit RuvB (315 aa).

Positions 1-168 are large ATPase domain (RuvB-L); it reads MAKKQEIRPK…FGLIGQISNY (168 aa). ATP is bound by residues Ile7, Arg8, Gly49, Lys52, Thr53, Ser54, 115–117, Arg158, Tyr168, and Arg205; that span reads EDF. Thr53 is a binding site for Mg(2+). The tract at residues 169-239 is small ATPAse domain (RuvB-S); the sequence is QVEDIEKIIK…LVNKTLKQLG (71 aa). Positions 242 to 315 are head domain (RuvB-H); that stretch reads ENGLNESQVK…QKGISYLERI (74 aa). Residues Lys297 and Arg302 each contribute to the DNA site.

This sequence belongs to the RuvB family. Homohexamer. Forms an RuvA(8)-RuvB(12)-Holliday junction (HJ) complex. HJ DNA is sandwiched between 2 RuvA tetramers; dsDNA enters through RuvA and exits via RuvB. An RuvB hexamer assembles on each DNA strand where it exits the tetramer. Each RuvB hexamer is contacted by two RuvA subunits (via domain III) on 2 adjacent RuvB subunits; this complex drives branch migration. In the full resolvosome a probable DNA-RuvA(4)-RuvB(12)-RuvC(2) complex forms which resolves the HJ.

Its subcellular location is the cytoplasm. The enzyme catalyses ATP + H2O = ADP + phosphate + H(+). The RuvA-RuvB-RuvC complex processes Holliday junction (HJ) DNA during genetic recombination and DNA repair, while the RuvA-RuvB complex plays an important role in the rescue of blocked DNA replication forks via replication fork reversal (RFR). RuvA specifically binds to HJ cruciform DNA, conferring on it an open structure. The RuvB hexamer acts as an ATP-dependent pump, pulling dsDNA into and through the RuvAB complex. RuvB forms 2 homohexamers on either side of HJ DNA bound by 1 or 2 RuvA tetramers; 4 subunits per hexamer contact DNA at a time. Coordinated motions by a converter formed by DNA-disengaged RuvB subunits stimulates ATP hydrolysis and nucleotide exchange. Immobilization of the converter enables RuvB to convert the ATP-contained energy into a lever motion, pulling 2 nucleotides of DNA out of the RuvA tetramer per ATP hydrolyzed, thus driving DNA branch migration. The RuvB motors rotate together with the DNA substrate, which together with the progressing nucleotide cycle form the mechanistic basis for DNA recombination by continuous HJ branch migration. Branch migration allows RuvC to scan DNA until it finds its consensus sequence, where it cleaves and resolves cruciform DNA. The sequence is that of Holliday junction branch migration complex subunit RuvB from Mycoplasmopsis pulmonis (strain UAB CTIP) (Mycoplasma pulmonis).